Consider the following 158-residue polypeptide: Botcinic acid biosynthesis cluster B protein 16 (158 aa).

It participates in polyketide biosynthesis. In terms of biological role, part of the gene cluster B that mediates the biosynthesis of botcinic acid and its botcinin derivatives, acetate-derived polyketides that contribute to virulence when combined with the sesquiterpene botrydial. Botcinic acid and its derivatives have been shown to induce chlorosis and necrosis during host plant infection, but also have antifungal activities. Two polyketide synthases, BOA6 and BOA9, are involved in the biosynthesis of botcinins. BOA6 mediates the formation of the per-methylated tetraketide core by condensation of four units of malonyl-CoA with one unit of acetyl-CoA, which would be methylated in activated methylene groups to yield a bicyclic acid intermediate that could then either be converted to botrylactone derivatives or lose the starter acetate unit through a retro-Claisen type C-C bond cleavage to yield botcinin derivatives. The second polyketide synthase, BOA9, is probably required for the biosynthesis of the tetraketide side chain of botcinins. The methyltransferase (MT) domain within BOA6 is probably responsible for the incorporation of four methyl groups. The trans-enoyl reductase BOA5 might take over the enoyl reductase function of BOA6 that misses an ER domain. The monooxygenases BOA2, BOA3 and BOA4 might be involved in further hydroxylations at C4, C5 and C8, whereas BOA7, close to BOA9, could potentially be involved in the hydroxylation at C4 in the side chain of botcinins. In Botryotinia fuckeliana (strain B05.10) (Noble rot fungus), this protein is Botcinic acid biosynthesis cluster B protein 16.